We begin with the raw amino-acid sequence, 249 residues long: MDDTGAAPVVIFGGRSQIGGELARRLAAGATMVLAARNADQLADQAAALRAAGAIAVHTREFDADDLAAHGPLVASLVAEHGPIGTAVLAFGILGDQARAETDAAHAVAIVHTDYVAQVSLLTHLAAAMRTAGRGSLVVFSSVAGIRVRRANYVYGSAKAGLDGFASGLADALHGTGVRLLIARPGFVIGRMTEGMTPAPLSVTPERVAAATACALVNGKRVVWIPWALRPMFVALRLLPRFVWRRMPR.

11 to 34 contributes to the NADP(+) binding site; sequence IFGGRSQIGGELARRLAAGATMVL. A substrate-binding site is contributed by S142. Y155 functions as the Proton acceptor in the catalytic mechanism.

Belongs to the short-chain dehydrogenases/reductases (SDR) family.

This is an uncharacterized protein from Mycobacterium tuberculosis (strain CDC 1551 / Oshkosh).